Consider the following 497-residue polypeptide: Probable malate:quinone oxidoreductase (497 aa).

The protein belongs to the MQO family. FAD is required as a cofactor.

The enzyme catalyses (S)-malate + a quinone = a quinol + oxaloacetate. Its pathway is carbohydrate metabolism; tricarboxylic acid cycle; oxaloacetate from (S)-malate (quinone route): step 1/1. The sequence is that of Probable malate:quinone oxidoreductase from Wolinella succinogenes (strain ATCC 29543 / DSM 1740 / CCUG 13145 / JCM 31913 / LMG 7466 / NCTC 11488 / FDC 602W) (Vibrio succinogenes).